A 506-amino-acid chain; its full sequence is DNA polymerase type-X family protein pol4 (506 aa).

The 98-residue stretch at 1–98 (MKILASSTNY…TPGNPYVIWH (98 aa)) folds into the BRCT domain. The tract at residues 106–150 (GSPYTPSTRPASHTEAPNDFENHETPNTENNNEVKSIDNVDQEGS) is disordered. The segment at 348-357 (RGKPVGADVD) is involved in ssDNA binding. 3 residues coordinate Mg(2+): Asp-355, Asp-357, and Asp-419.

It belongs to the DNA polymerase type-X family. It depends on Mg(2+) as a cofactor.

The protein localises to the cytoplasm. It is found in the nucleus. The catalysed reaction is DNA(n) + a 2'-deoxyribonucleoside 5'-triphosphate = DNA(n+1) + diphosphate. Functionally, repair polymerase. Involved in gap-filling in DNA non-homologous end joining (NHEJ) required for double-strand break repair. Can incorporate a ribonucleotide (rNTP) into a primer DNA. The polypeptide is DNA polymerase type-X family protein pol4 (pol4) (Schizosaccharomyces pombe (strain 972 / ATCC 24843) (Fission yeast)).